Reading from the N-terminus, the 203-residue chain is Glutathione S-transferase 2 (203 aa).

A GST N-terminal domain is found at 1 to 78 (MPKVVFHYFG…YLGRKYGLAG (78 aa)). Glutathione contacts are provided by residues tyrosine 8, tryptophan 38, lysine 42, 48-50 (GQM), and 62-63 (QS). In terms of domain architecture, GST C-terminal spans 80-203 (DIEEDFEIDQ…YLDSAPKKEF (124 aa)).

This sequence belongs to the GST superfamily. Sigma family. Homodimer.

The catalysed reaction is RX + glutathione = an S-substituted glutathione + a halide anion + H(+). Conjugation of reduced glutathione to a wide number of exogenous and endogenous hydrophobic electrophiles. The protein is Glutathione S-transferase 2 (GST2) of Manduca sexta (Tobacco hawkmoth).